The sequence spans 369 residues: Tryptophan 2,3-dioxygenase 2 (369 aa).

Residues 36 to 40 (FIVVH) and Arg107 each bind substrate. His303 is a heme binding site. Thr317 serves as a coordination point for substrate.

This sequence belongs to the tryptophan 2,3-dioxygenase family. Homotetramer. Heme is required as a cofactor.

It catalyses the reaction L-tryptophan + O2 = N-formyl-L-kynurenine. The protein operates within amino-acid degradation; L-tryptophan degradation via kynurenine pathway; L-kynurenine from L-tryptophan: step 1/2. Its function is as follows. Heme-dependent dioxygenase that catalyzes the oxidative cleavage of the L-tryptophan (L-Trp) pyrrole ring and converts L-tryptophan to N-formyl-L-kynurenine. Catalyzes the oxidative cleavage of the indole moiety. In Ralstonia nicotianae (strain ATCC BAA-1114 / GMI1000) (Ralstonia solanacearum), this protein is Tryptophan 2,3-dioxygenase 2.